Consider the following 365-residue polypeptide: Peptide chain release factor 2 (365 aa).

Q252 carries the post-translational modification N5-methylglutamine.

Belongs to the prokaryotic/mitochondrial release factor family. Post-translationally, methylated by PrmC. Methylation increases the termination efficiency of RF2.

Its subcellular location is the cytoplasm. Peptide chain release factor 2 directs the termination of translation in response to the peptide chain termination codons UGA and UAA. This chain is Peptide chain release factor 2, found in Escherichia coli O8 (strain IAI1).